Consider the following 349-residue polypeptide: Eukaryotic translation initiation factor 3 subunit I (349 aa).

6 WD repeats span residues 8 to 49 (GHER…GTLE), 51 to 91 (HIGT…QSWE), 93 to 135 (PTPV…DYTK), 148 to 187 (SDAK…FIET), 197 to 239 (EKIA…KVYK), and 295 to 336 (GHFG…FEFD).

It belongs to the eIF-3 subunit I family. Component of the eukaryotic translation initiation factor 3 (eIF-3) complex.

Its subcellular location is the cytoplasm. In terms of biological role, component of the eukaryotic translation initiation factor 3 (eIF-3) complex, which is involved in protein synthesis of a specialized repertoire of mRNAs and, together with other initiation factors, stimulates binding of mRNA and methionyl-tRNAi to the 40S ribosome. The eIF-3 complex specifically targets and initiates translation of a subset of mRNAs involved in cell proliferation. This is Eukaryotic translation initiation factor 3 subunit I from Debaryomyces hansenii (strain ATCC 36239 / CBS 767 / BCRC 21394 / JCM 1990 / NBRC 0083 / IGC 2968) (Yeast).